Here is a 914-residue protein sequence, read N- to C-terminus: Golgin candidate 6 (914 aa).

Coiled-coil stretches lie at residues 723–837 (IEKQ…SLKG) and 863–901 (EDEL…LEDI). The residue at position 911 (S911) is a Phosphoserine.

It is found in the golgi apparatus. It localises to the golgi stack. In terms of biological role, golgi matrix protein playing a role in tethering of vesicles to Golgi membranes and in maintaining the overall structure of the Golgi apparatus. Functions in the anterograde transport of storage protein precursors from the endoplasmic reticulum (ER) to the Golgi complex. This is Golgin candidate 6 (GC6) from Arabidopsis thaliana (Mouse-ear cress).